The primary structure comprises 633 residues: FAD-binding monooxygenase andJ (633 aa).

Residues 117-120 (TWYW), 129-130 (DT), and Tyr135 each bind FAD. 127–129 (MCD) is a binding site for NADP(+). NADP(+) is bound by residues 269-275 (TGASAVQ) and 292-293 (RT).

The protein belongs to the FAD-binding monooxygenase family. It depends on FAD as a cofactor.

The protein operates within secondary metabolite biosynthesis; terpenoid biosynthesis. FAD-binding monooxygenase; part of the gene cluster that mediates the biosynthesis of anditomin, a fungal meroterpenoid. The first step of the pathway is the synthesis of 3,5-dimethylorsellinic acid (DMOA) by the polyketide synthase andM. DMOA is then converted to the phthalide compound 5,7-dihydroxy-4,6-dimethylphthalide (DHDMP) by the cytochrome P450 monooxygenase andK, which is further prenylated by the prenyltransferase andD to yield farnesyl-DHDMP. Further epoxidation by the FAD-dependent monooxygenase andE leads to epoxyfarnesyl-DHDMP. The next step involves the terpene cyclase andB that converts epoxyfarnesyl-DHDMP into preandiloid A through opening of the epoxide ring followed by the cyclization of the farnesyl moiety. Preandiloid A is in turn oxidized at the C-3 hydroxyl group to yield preandiloid B by the dehydrogenase andC. The dioxygenase andA is solely responsible for the dehydrogenation of preandiloid B leading to the enone preandiloid C, as well as for the intriguing structural rearrangement to generate the bicyclo[2.2.2]octane core, transforming preandiloid C into andiconin. FAD-binding monooxygenase andJ then produces andilesin D which is reduced by dehydrogenase andI to yield andilesin A. Action of acetyltransferase andG followed by a spontaneous acetate elimination leads then to andilesin B, which is in turn substrate of the short chain dehydrogenase andH to yield andilesin C. Finally, the dioxygenase andF catalyzes the transformation of andilesin C to anditomin. In Emericella variicolor (Aspergillus stellatus), this protein is FAD-binding monooxygenase andJ.